We begin with the raw amino-acid sequence, 164 residues long: Cytochrome c-type biogenesis protein CcmE (164 aa).

At 1–8 (MNPRRQKR) the chain is on the cytoplasmic side. The helical; Signal-anchor for type II membrane protein transmembrane segment at 9 to 29 (LIVISAIVLVIGAAIGLMLYA) threads the bilayer. Over 30–164 (LSQNIDLFYT…QAYSTPKVSG (135 aa)) the chain is Periplasmic. The heme site is built by His-132 and Tyr-136.

This sequence belongs to the CcmE/CycJ family.

It is found in the cell inner membrane. Heme chaperone required for the biogenesis of c-type cytochromes. Transiently binds heme delivered by CcmC and transfers the heme to apo-cytochromes in a process facilitated by CcmF and CcmH. In Pseudoalteromonas atlantica (strain T6c / ATCC BAA-1087), this protein is Cytochrome c-type biogenesis protein CcmE.